Reading from the N-terminus, the 295-residue chain is Pyridoxal 5'-phosphate synthase subunit PdxS (295 aa).

Residue Asp25 coordinates D-ribose 5-phosphate. The active-site Schiff-base intermediate with D-ribose 5-phosphate is the Lys82. Residue Gly154 participates in D-ribose 5-phosphate binding. D-glyceraldehyde 3-phosphate is bound at residue Arg166. D-ribose 5-phosphate contacts are provided by residues Gly215 and 236-237; that span reads GS.

Belongs to the PdxS/SNZ family. In terms of assembly, in the presence of PdxT, forms a dodecamer of heterodimers.

The catalysed reaction is aldehydo-D-ribose 5-phosphate + D-glyceraldehyde 3-phosphate + L-glutamine = pyridoxal 5'-phosphate + L-glutamate + phosphate + 3 H2O + H(+). It functions in the pathway cofactor biosynthesis; pyridoxal 5'-phosphate biosynthesis. Its function is as follows. Catalyzes the formation of pyridoxal 5'-phosphate from ribose 5-phosphate (RBP), glyceraldehyde 3-phosphate (G3P) and ammonia. The ammonia is provided by the PdxT subunit. Can also use ribulose 5-phosphate and dihydroxyacetone phosphate as substrates, resulting from enzyme-catalyzed isomerization of RBP and G3P, respectively. The chain is Pyridoxal 5'-phosphate synthase subunit PdxS from Haemophilus ducreyi (strain 35000HP / ATCC 700724).